A 389-amino-acid chain; its full sequence is Chalcone synthase 4 (389 aa).

The active site involves cysteine 164.

It belongs to the thiolase-like superfamily. Chalcone/stilbene synthases family.

It catalyses the reaction (E)-4-coumaroyl-CoA + 3 malonyl-CoA + 3 H(+) = 2',4,4',6'-tetrahydroxychalcone + 3 CO2 + 4 CoA. It functions in the pathway secondary metabolite biosynthesis; flavonoid biosynthesis. Functionally, the primary product of this enzyme is 4,2',4',6'-tetrahydroxychalcone (also termed naringenin-chalcone or chalcone) which can under specific conditions spontaneously isomerize into naringenin. This chain is Chalcone synthase 4 (CHS4), found in Pisum sativum (Garden pea).